The primary structure comprises 872 residues: Alanine--tRNA ligase (872 aa).

Zn(2+) is bound by residues His-566, His-570, Cys-668, and His-672.

This sequence belongs to the class-II aminoacyl-tRNA synthetase family. Requires Zn(2+) as cofactor.

Its subcellular location is the cytoplasm. The catalysed reaction is tRNA(Ala) + L-alanine + ATP = L-alanyl-tRNA(Ala) + AMP + diphosphate. Its function is as follows. Catalyzes the attachment of alanine to tRNA(Ala) in a two-step reaction: alanine is first activated by ATP to form Ala-AMP and then transferred to the acceptor end of tRNA(Ala). Also edits incorrectly charged Ser-tRNA(Ala) and Gly-tRNA(Ala) via its editing domain. The protein is Alanine--tRNA ligase of Lactococcus lactis subsp. lactis (strain IL1403) (Streptococcus lactis).